We begin with the raw amino-acid sequence, 266 residues long: Killer cell lectin-like receptor 8 (266 aa).

Residues 1-44 (MSEQEVTFPTMRFHKSSGLNSQVRLEGTQRSRKAGLRVCSVPWQ) lie on the Cytoplasmic side of the membrane. Residues 45–66 (LIVIALGILCSLRLVIVAVFVT) traverse the membrane as a helical; Signal-anchor for type II membrane protein segment. Over 67–266 (KFFQYSQHKQ…CGKKLDKFPD (200 aa)) the chain is Extracellular. N-linked (GlcNAc...) asparagine glycosylation is found at Asn87 and Asn104. The region spanning 143-261 (GVKYWFCYGT…PYYCICGKKL (119 aa)) is the C-type lectin domain. Disulfide bonds link Cys149–Cys154, Cys167–Cys255, Cys171–Cys257, and Cys236–Cys249.

Homodimer; disulfide-linked. Interacts with the adapter protein TYROBP/DAP12; the interaction leads to natural killer cell activation.

It is found in the cell membrane. In terms of biological role, receptor on natural killer (NK) cells for class I MHC. This is Killer cell lectin-like receptor 8 (Klra8) from Mus musculus (Mouse).